A 98-amino-acid polypeptide reads, in one-letter code: Integration host factor subunit alpha (98 aa).

The tract at residues 49 to 72 is disordered; sequence FGNFDLRDKNQRPGRNPKTGEDIP.

It belongs to the bacterial histone-like protein family. Heterodimer of an alpha and a beta chain.

In terms of biological role, this protein is one of the two subunits of integration host factor, a specific DNA-binding protein that functions in genetic recombination as well as in transcriptional and translational control. The sequence is that of Integration host factor subunit alpha from Shewanella loihica (strain ATCC BAA-1088 / PV-4).